We begin with the raw amino-acid sequence, 467 residues long: Argininosuccinate lyase (467 aa).

This sequence belongs to the lyase 1 family. Argininosuccinate lyase subfamily.

It localises to the cytoplasm. The enzyme catalyses 2-(N(omega)-L-arginino)succinate = fumarate + L-arginine. The protein operates within amino-acid biosynthesis; L-arginine biosynthesis; L-arginine from L-ornithine and carbamoyl phosphate: step 3/3. The polypeptide is Argininosuccinate lyase (Rhizobium johnstonii (strain DSM 114642 / LMG 32736 / 3841) (Rhizobium leguminosarum bv. viciae)).